A 343-amino-acid chain; its full sequence is Serpentine receptor class alpha-11 (343 aa).

At 1-24 (MSSPDTPVCASPQQMEMYNSHFYT) the chain is on the extracellular side. A helical membrane pass occupies residues 25–45 (CALFFNLLIAFTSMTLIIMAI). Topologically, residues 46–60 (RKLLTESIINTSTRM) are cytoplasmic. Residues 61-81 (FLIVGLLCCSLHQTAYIVLRV) form a helical membrane-spanning segment. Residues 82-106 (QVIFQILFKLDQPCKLYYKAYDCKY) are Extracellular-facing. A helical membrane pass occupies residues 107 to 127 (VTFSLVAGNTGMIFIQSAMTI). Over 128 to 146 (DRILTTVFTNLWPKLKYWP) the chain is Cytoplasmic. Residues 147–167 (GVILSSFMIGCNFTNVQFIFW) traverse the membrane as a helical segment. Over 168-192 (NDPLTDYVPTCGQFPPKSVGRFQKF) the chain is Extracellular. Residues 193–213 (LEIALYMSLAHMVINVIILYI) traverse the membrane as a helical segment. Residues 214-247 (NVVQDRRQRLVSTHDQSQSFDVNQRFQSRVALKS) are Cytoplasmic-facing. The chain crosses the membrane as a helical span at residues 248 to 268 (TQAIFFLSMSQFLSCFLYTIF). Residues 269 to 291 (TKLYLTLQPDMTPLQSGLTLALT) are Extracellular-facing. The helical transmembrane segment at 292 to 312 (YTTPYACIAIPSLIMVTLTFI) threads the bilayer. The Cytoplasmic segment spans residues 313–343 (RNQRHRSINALRSQTETGDQYMQKIKKIWDK).

It belongs to the nematode receptor-like protein sra family.

Its subcellular location is the membrane. A G protein-coupled receptor required for olfactory imprinting a requisite in ordorant response such as benzaldehyde and isoamylalcohol. In Caenorhabditis briggsae, this protein is Serpentine receptor class alpha-11.